A 403-amino-acid polypeptide reads, in one-letter code: Phosphopentomutase (403 aa).

The Mn(2+) site is built by aspartate 13, aspartate 298, histidine 303, aspartate 339, histidine 340, and histidine 351.

The protein belongs to the phosphopentomutase family. Mn(2+) is required as a cofactor.

Its subcellular location is the cytoplasm. It carries out the reaction 2-deoxy-alpha-D-ribose 1-phosphate = 2-deoxy-D-ribose 5-phosphate. The catalysed reaction is alpha-D-ribose 1-phosphate = D-ribose 5-phosphate. It functions in the pathway carbohydrate degradation; 2-deoxy-D-ribose 1-phosphate degradation; D-glyceraldehyde 3-phosphate and acetaldehyde from 2-deoxy-alpha-D-ribose 1-phosphate: step 1/2. In terms of biological role, isomerase that catalyzes the conversion of deoxy-ribose 1-phosphate (dRib-1-P) and ribose 1-phosphate (Rib-1-P) to deoxy-ribose 5-phosphate (dRib-5-P) and ribose 5-phosphate (Rib-5-P), respectively. This Streptococcus pneumoniae serotype 4 (strain ATCC BAA-334 / TIGR4) protein is Phosphopentomutase.